The following is a 273-amino-acid chain: Dermonecrotic toxin LdSicTox-alphaIB1aii (273 aa).

Residue His-5 is part of the active site. Glu-25 and Asp-27 together coordinate Mg(2+). His-41 acts as the Nucleophile in catalysis. Intrachain disulfides connect Cys-45/Cys-51 and Cys-47/Cys-190. Residue Asp-85 coordinates Mg(2+). Residue Asn-250 is glycosylated (N-linked (GlcNAc...) asparagine).

It belongs to the arthropod phospholipase D family. Class II subfamily. Requires Mg(2+) as cofactor. As to expression, expressed by the venom gland.

The protein resides in the secreted. It catalyses the reaction an N-(acyl)-sphingosylphosphocholine = an N-(acyl)-sphingosyl-1,3-cyclic phosphate + choline. The catalysed reaction is an N-(acyl)-sphingosylphosphoethanolamine = an N-(acyl)-sphingosyl-1,3-cyclic phosphate + ethanolamine. The enzyme catalyses a 1-acyl-sn-glycero-3-phosphocholine = a 1-acyl-sn-glycero-2,3-cyclic phosphate + choline. It carries out the reaction a 1-acyl-sn-glycero-3-phosphoethanolamine = a 1-acyl-sn-glycero-2,3-cyclic phosphate + ethanolamine. Functionally, dermonecrotic toxins cleave the phosphodiester linkage between the phosphate and headgroup of certain phospholipids (sphingolipid and lysolipid substrates), forming an alcohol (often choline) and a cyclic phosphate. This toxin acts on sphingomyelin (SM). It may also act on ceramide phosphoethanolamine (CPE), lysophosphatidylcholine (LPC) and lysophosphatidylethanolamine (LPE), but not on lysophosphatidylserine (LPS), and lysophosphatidylglycerol (LPG). It acts by transphosphatidylation, releasing exclusively cyclic phosphate products as second products. Induces dermonecrosis, hemolysis, increased vascular permeability, edema, inflammatory response, and platelet aggregation. The sequence is that of Dermonecrotic toxin LdSicTox-alphaIB1aii from Loxosceles deserta (Desert recluse spider).